Consider the following 81-residue polypeptide: ATP synthase subunit c (81 aa).

Helical transmembrane passes span 7 to 27 (AASV…PGIG) and 57 to 77 (LAFM…LLFA).

This sequence belongs to the ATPase C chain family. As to quaternary structure, F-type ATPases have 2 components, F(1) - the catalytic core - and F(0) - the membrane proton channel. F(1) has five subunits: alpha(3), beta(3), gamma(1), delta(1), epsilon(1). F(0) has four main subunits: a(1), b(1), b'(1) and c(10-14). The alpha and beta chains form an alternating ring which encloses part of the gamma chain. F(1) is attached to F(0) by a central stalk formed by the gamma and epsilon chains, while a peripheral stalk is formed by the delta, b and b' chains.

The protein resides in the cellular thylakoid membrane. F(1)F(0) ATP synthase produces ATP from ADP in the presence of a proton or sodium gradient. F-type ATPases consist of two structural domains, F(1) containing the extramembraneous catalytic core and F(0) containing the membrane proton channel, linked together by a central stalk and a peripheral stalk. During catalysis, ATP synthesis in the catalytic domain of F(1) is coupled via a rotary mechanism of the central stalk subunits to proton translocation. Functionally, key component of the F(0) channel; it plays a direct role in translocation across the membrane. A homomeric c-ring of between 10-14 subunits forms the central stalk rotor element with the F(1) delta and epsilon subunits. This Nostoc sp. (strain PCC 7120 / SAG 25.82 / UTEX 2576) protein is ATP synthase subunit c.